Here is a 309-residue protein sequence, read N- to C-terminus: Probable manganese-dependent inorganic pyrophosphatase (309 aa).

Residues H9, D13, D15, D75, H97, and D149 each contribute to the Mn(2+) site.

Belongs to the PPase class C family. Requires Mn(2+) as cofactor.

It localises to the cytoplasm. The enzyme catalyses diphosphate + H2O = 2 phosphate + H(+). The protein is Probable manganese-dependent inorganic pyrophosphatase of Bacillus cereus (strain G9842).